Consider the following 456-residue polypeptide: RuvB-like 1 (456 aa).

Lysine 2 is covalently cross-linked (Glycyl lysine isopeptide (Lys-Gly) (interchain with G-Cter in SUMO2)). Glycine 70 to threonine 77 serves as a coordination point for ATP. Residue lysine 225 forms a Glycyl lysine isopeptide (Lys-Gly) (interchain with G-Cter in SUMO1); alternate linkage. Lysine 225 participates in a covalent cross-link: Glycyl lysine isopeptide (Lys-Gly) (interchain with G-Cter in SUMO2); alternate. Residue lysine 445 forms a Glycyl lysine isopeptide (Lys-Gly) (interchain with G-Cter in SUMO2) linkage. Lysine 453 is modified (N6-acetyllysine).

It belongs to the RuvB family. In terms of assembly, forms homohexameric rings. Can form a dodecamer with RUVBL2 made of two stacked hexameric rings; however, even though RUVBL1 and RUVBL2 are present in equimolar ratio, the oligomeric status of each hexamer is not known. Oligomerization may regulate binding to nucleic acids and conversely, binding to nucleic acids may affect the dodecameric assembly. Interaction of the complex with DHX34 results in conformational changes of the N-terminus of the RUVBL2 subunits, resulting in loss of nucleotide binding ability and ATP hydrolysis of the complex. Interacts with the transcriptional activation domain of MYC. Component of the RNA polymerase II holoenzyme complex. May also act to bridge the LEF1/TCF1-CTNNB1 complex and TBP. Component of the NuA4 histone acetyltransferase complex which contains the catalytic subunit KAT5/TIP60 and the subunits EP400, TRRAP/PAF400, BRD8/SMAP, EPC1, DMAP1/DNMAP1, RUVBL1/TIP49, RUVBL2, ING3, actin, ACTL6A/BAF53A, MORF4L1/MRG15, MORF4L2/MRGX, MRGBP, YEATS4/GAS41, VPS72/YL1 and MEAF6. The NuA4 complex interacts with MYC and the adenovirus E1A protein. RUVBL1 interacts with EP400. Component of a NuA4-related complex which contains EP400, TRRAP/PAF400, SRCAP, BRD8/SMAP, EPC1, DMAP1/DNMAP1, RUVBL1/TIP49, RUVBL2, actin, ACTL6A/BAF53A, VPS72 and YEATS4/GAS41. Component of the BAF53 complex, at least composed of ACTL6A/BAF53A, RUVBL1/TIP49, SMARCA2/BRM, and TRRAP/PAF400. Component of some MLL1/MLL complex, at least composed of the core components KMT2A/MLL1, ASH2L, HCFC1/HCF1, WDR5 and RBBP5, as well as the facultative components BACC1, CHD8, E2F6, HSP70, INO80C, KANSL1, LAS1L, MAX, MCRS1, MGA, MYST1/MOF, PELP1, PHF20, PRP31, RING2, RUVB1/TIP49A, RUVB2/TIP49B, SENP3, TAF1, TAF4, TAF6, TAF7, TAF9 and TEX10. Associates with alpha and gamma tubulins, particularly during metaphase and early anaphase. Interacts with NPAT. Component of the chromatin-remodeling INO80 complex; specifically part of a complex module associated with the helicase ATP-binding and the helicase C-terminal domain of INO80. Interacts with IGHMBP2. Interacts with OFD1. Interacts with HINT1. Component of a complex with USP49 and PSMC5. Component of a SWR1-like complex. Component of the R2TP complex composed at least of RUVBL1, RUVBL2, RPAP3 and PIHD1. Component of the PAQosome complex which is responsible for the biogenesis of several protein complexes and which consists of R2TP complex members RUVBL1, RUVBL2, RPAP3 and PIH1D1, URI complex members PFDN2, PFDN6, PDRG1, UXT and URI1 as well as ASDURF, POLR2E and DNAAF10/WDR92. Interacts with PIH1D1. Interacts with ITFG1. Interacts with WAC; WAC positively regulates MTOR activity by promoting the assembly of the TTT complex composed of TELO2, TTI1 and TTI2 and the RUVBL complex composed of RUVBL1 and RUVBL2 into the TTT-RUVBL complex which leads to the dimerization of the mTORC1 complex and its subsequent activation. The RUVBL1/RUVBL2 complex interacts with ZNHIT1 (via HIT-type zinc finger), ZNHIT3 (via HIT-type zinc finger), ZNHIT6 (via HIT-type zinc finger) and DDX59/ZNHIT5 (via HIT-type zinc finger) in the presence of ADP. Interacts with NOPCHAP1; the interaction is direct and disrupted upon ATP binding. Interacts with SMG1. Interacts with NOP2, NOP56 and NUFIP1. As to quaternary structure, (Microbial infection) Interacts with Mumps L polymerase; this interaction regulates the viral transcription. In terms of tissue distribution, ubiquitously expressed with high expression in heart, skeletal muscle and testis.

The protein resides in the nucleus matrix. Its subcellular location is the nucleus. The protein localises to the nucleoplasm. It is found in the cytoplasm. It localises to the membrane. The protein resides in the cytoskeleton. Its subcellular location is the microtubule organizing center. The protein localises to the centrosome. It is found in the dynein axonemal particle. The enzyme catalyses ATP + H2O = ADP + phosphate + H(+). Its function is as follows. Possesses single-stranded DNA-stimulated ATPase and ATP-dependent DNA helicase (3' to 5') activity; hexamerization is thought to be critical for ATP hydrolysis and adjacent subunits in the ring-like structure contribute to the ATPase activity. Component of the NuA4 histone acetyltransferase complex which is involved in transcriptional activation of select genes principally by acetylation of nucleosomal histones H4 and H2A. This modification may both alter nucleosome-DNA interactions and promote interaction of the modified histones with other proteins which positively regulate transcription. This complex may be required for the activation of transcriptional programs associated with oncogene and proto-oncogene mediated growth induction, tumor suppressor mediated growth arrest and replicative senescence, apoptosis, and DNA repair. The NuA4 complex ATPase and helicase activities seem to be, at least in part, contributed by the association of RUVBL1 and RUVBL2 with EP400. NuA4 may also play a direct role in DNA repair when recruited to sites of DNA damage. Component of a SWR1-like complex that specifically mediates the removal of histone H2A.Z/H2AZ1 from the nucleosome. Proposed core component of the chromatin remodeling INO80 complex which exhibits DNA- and nucleosome-activated ATPase activity and catalyzes ATP-dependent nucleosome sliding. Plays an essential role in oncogenic transformation by MYC and also modulates transcriptional activation by the LEF1/TCF1-CTNNB1 complex. Essential for cell proliferation. May be able to bind plasminogen at cell surface and enhance plasminogen activation. In Homo sapiens (Human), this protein is RuvB-like 1.